Reading from the N-terminus, the 388-residue chain is Chorismate synthase (388 aa).

Residues arginine 39 and arginine 45 each coordinate NADP(+). FMN-binding positions include 130–132 (RSS), 251–252 (NA), glycine 296, 311–315 (KPIPT), and arginine 337.

The protein belongs to the chorismate synthase family. In terms of assembly, homotetramer. The cofactor is FMNH2.

It catalyses the reaction 5-O-(1-carboxyvinyl)-3-phosphoshikimate = chorismate + phosphate. Its pathway is metabolic intermediate biosynthesis; chorismate biosynthesis; chorismate from D-erythrose 4-phosphate and phosphoenolpyruvate: step 7/7. Catalyzes the anti-1,4-elimination of the C-3 phosphate and the C-6 proR hydrogen from 5-enolpyruvylshikimate-3-phosphate (EPSP) to yield chorismate, which is the branch point compound that serves as the starting substrate for the three terminal pathways of aromatic amino acid biosynthesis. This reaction introduces a second double bond into the aromatic ring system. The sequence is that of Chorismate synthase from Streptococcus pyogenes serotype M6 (strain ATCC BAA-946 / MGAS10394).